We begin with the raw amino-acid sequence, 482 residues long: Histone deacetylase 1 (482 aa).

The histone deacetylase stretch occupies residues 9-321 (RKVCYYYDGD…WTYETAVALD (313 aa)). Residues Gly-27 and Lys-31 each coordinate 1D-myo-inositol 1,4,5,6-tetrakisphosphate. Lys-74 is modified (N6-acetyllysine; alternate). A Glycyl lysine isopeptide (Lys-Gly) (interchain with G-Cter in SUMO2); alternate cross-link involves residue Lys-74. The active site involves His-141. Residues Asp-176 and His-178 each coordinate Zn(2+). Lys-220 is subject to N6-acetyllysine. An S-nitrosocysteine modification is found at Cys-261. A Zn(2+)-binding site is contributed by Asp-264. A 1D-myo-inositol 1,4,5,6-tetrakisphosphate-binding site is contributed by Arg-270. Position 273 is an S-nitrosocysteine (Cys-273). The span at 390–400 (PEESGDEDEDD) shows a compositional bias: acidic residues. Residues 390–482 (PEESGDEDED…KGVKEEVKLA (93 aa)) form a disordered region. 3 positions are modified to phosphoserine: Ser-393, Ser-406, and Ser-409. Over residues 401-416 (PDKRISICSSDKRIAC) the composition is skewed to basic and acidic residues. The span at 417–427 (EEEFSDSEEEG) shows a compositional bias: acidic residues. 2 positions are modified to phosphoserine; by CK2: Ser-421 and Ser-423. Lys-432 carries the N6-methylated lysine; by EHMT2 modification. Residue Lys-438 forms a Glycyl lysine isopeptide (Lys-Gly) (interchain with G-Cter in SUMO2) linkage. Residues 443–482 (VKTEDEKEKDPEEKKEVTEEEKTKEEKPEAKGVKEEVKLA) are compositionally biased toward basic and acidic residues. Lys-444 participates in a covalent cross-link: Glycyl lysine isopeptide (Lys-Gly) (interchain with G-Cter in SUMO2); alternate. A Glycyl lysine isopeptide (Lys-Gly) (interchain with G-Cter in SUMO); alternate cross-link involves residue Lys-444. Glycyl lysine isopeptide (Lys-Gly) (interchain with G-Cter in SUMO2) cross-links involve residues Lys-456, Lys-457, and Lys-473. A Glycyl lysine isopeptide (Lys-Gly) (interchain with G-Cter in SUMO2); alternate cross-link involves residue Lys-476. A Glycyl lysine isopeptide (Lys-Gly) (interchain with G-Cter in SUMO); alternate cross-link involves residue Lys-476. A Glycyl lysine isopeptide (Lys-Gly) (interchain with G-Cter in SUMO2) cross-link involves residue Lys-480.

The protein belongs to the histone deacetylase family. HD type 1 subfamily. In terms of assembly, part of the core histone deacetylase (HDAC) complex composed of HDAC1, HDAC2, RBBP4 and RBBP7, the core complex associates with SIN3, SAP18 and SAP30 to form the SIN3 HDAC complex. Component of the nucleosome remodeling and deacetylase (NuRD) repressor complex, composed of core proteins MTA1, MTA2, MTA3, RBBP4, RBBP7, HDAC1, HDAC2, MBD2, MBD3, and peripherally associated proteins CDK2AP1, CDK2AP2, GATAD2A, GATAD2B, CHD3, CHD4 and CHD5. The exact stoichiometry of the NuRD complex is unknown, and some subunits such as MBD2 and MBD3, GATAD2A and GATAD2B, and CHD3, CHD4 and CHD5 define mutually exclusive NuRD complexes. Component of a BHC histone deacetylase complex that contains HDAC1, HDAC2, HMG20B/BRAF35, KDM1A, RCOR1/CoREST and PHF21A/BHC80. The BHC complex may also contain ZMYM2, ZNF217, ZMYM3, GSE1 and GTF2I. Component of a mSin3A corepressor complex that contains SIN3A, SAP130, SUDS3/SAP45, ARID4B/SAP180, HDAC1 and HDAC2. Component of the SIN3B complex, which includes SIN3B, HDAC1, PHF12 and MORF4L1. Found in a trimeric complex with APBB1 and TSHZ3; the interaction between HDAC1 and APBB1 is mediated by TSHZ3. Forms a complex comprising APPL1, RUVBL2, APPL2, CTNNB1 and HDAC2. Component of a RCOR/GFI/KDM1A/HDAC complex. Part of a complex composed of TRIM28, HDAC1, HDAC2 and EHMT2. Part of a complex containing at least CDYL, MIER1, MIER2, HDAC1 and HDAC2. The large PER complex involved in the histone deacetylation is composed of at least HDAC1, PER2, SFPQ and SIN3A. Associates with the 9-1-1 complex; interacts with HUS1. Found in a complex with DNMT3A and HDAC7. Found in a complex with YY1, SIN3A and GON4L. Identified in a histone deacetylase complex that contains DNTTIP1, HDAC1 and MIDEAS; this complex assembles into a tetramer that contains four copies of each protein chain. Found in a complex composed of at least SINHCAF, SIN3A, HDAC1, SAP30, RBBP4, OGT and TET1. Interacts with GFI1; the interaction is direct. Interacts directly with GFI1B. Interacts with TSHZ3 (via N-terminus); the interaction is direct. Interacts with APEX1; the interaction is not dependent on the acetylated status of APEX1. Interacts with BANP. Interacts with BAZ2A/TIP5. Interacts with BCL6. Interacts with BCOR. Interacts with BHLHE40/DEC1. Interacts with BRCC3; this interaction is enhanced in the presence of PWWP2B. Interacts with BRMS1. Interacts with BRMS1L. Interacts with C10orf90/FATS (via its N-terminal); the interaction prevents binding of HDAC1 to CDKN1A/p21 and facilitates the acetylation and stabilization of CDKN1A/p21. Interacts with CBFA2T3. Interacts with CCAR2. Interacts with CDK2AP1. Interacts with CHD3. Interacts with CHD4. Interacts with CHFR. Interacts with CIART. Interacts with CDKN1A/p21. Interacts with CDK5 complexed to CDK5R1 (p25). Interacts with CRY1. Interacts with DAXX. Interacts with DDIT3/CHOP. Interacts with DDX5. Interacts with DHX36; this interaction occurs in a RNA-dependent manner. Interacts with DNMT1. Interacts with DNTTIP1. Interacts with E4F1. Interacts with EP300. Interacts with ERCC6. Interacts with GATAD2A. Interacts with HCFC1. Interacts with HDAC9. Interacts with HUS1. Interacts with INSM1. Interacts with KDM4A. Interacts with KDM5A; this interaction impairs histone deacetylation. Interacts with KDM5B. Interacts with KLF1. Interacts with MBD3L2. Interacts with MIER1. Interacts with NFE4. Interacts with NR4A2/NURR1. Interacts with NR1D2 (via C-terminus). Interacts with NRIP1. Interacts with NSD2. Interacts with PACS2. Interacts with PHB2. Interacts with PPHLN1. Interacts with PRDM6. Interacts with PRDM16. Interacts with PWWP2A in a MTA1-dependent manner. Interacts with PWWP2B. Interacts with RB1. Interacts with RERE. Interacts with SANBR (via the BTB domain). Interacts with SAMSN1. Interacts with SAP30L. Interacts with SETDB1. Interacts with SIN3A. Interacts with SMAD3. Interacts with SMAD4; positively regulated by ZBTB7A. Interacts with SMARCAD1. Interacts with SMARCA4/BRG1. Interacts with SMYD2. Interacts with SMYD4 (via MYND-type zinc finger). Interacts with SP1; the interaction deacetylates SP1 and regulates its transcriptional activity. Interacts with SP3; the interaction deacetylates SP3 and regulates its transcriptional activity. In vitro, C(18) ceramides increase this interaction and the subsequent SP3 deacetylation and SP3-mediated repression of the TERT promoter. Interacts with SPEN/MINT. Interacts with SPHK2. Interacts with SUV39H1. Interacts with TGIF. Interacts with TGIF2. Interacts with TRAF6. Interacts with TRIM28; the interaction recruits HDAC1 to E2F1 and inhibits its acetylation. Interacts with TSC22D3 isoform 1; this interaction affects HDAC1 activity on MYOG promoter and thus inhibits MYOD1 transcriptional activity. Interacts with UHRF1. Interacts with UHRF2. Interacts with ZBTB7A. Interacts with ZMYND8. Interacts with ZMYND15. Interacts with ZNF431. Interacts with ZNF516; this interaction is enhanced in the presence of PWWP2B. Interacts with ZNF541. Interacts with ZNF638. Interacts with ZNHIT1. Interacts with the non-histone region of MACROH2A1. Identified in a complex with HDAC2, KCTD19, DNTTIP1 and ZNF541. Interacts with VRK1. As to quaternary structure, (Microbial infection) Interacts with SV40 large T antigen. The cofactor is Zn(2+). In terms of processing, sumoylated on Lys-444 and Lys-476; which promotes enzymatic activity. Desumoylated by SENP1. Post-translationally, phosphorylation on Ser-421 and Ser-423 promotes enzymatic activity and interactions with NuRD and SIN3 complexes. Phosphorylated by CDK5. Ubiquitinated by CHFR, leading to its degradation by the proteasome. Ubiquitinated by KCTD11, leading to proteasomal degradation. In terms of tissue distribution, ubiquitous, with higher levels in heart, pancreas and testis, and lower levels in kidney and brain.

It is found in the nucleus. The catalysed reaction is N(6)-acetyl-L-lysyl-[histone] + H2O = L-lysyl-[histone] + acetate. It carries out the reaction N(6)-acetyl-L-lysyl-[protein] + H2O = L-lysyl-[protein] + acetate. It catalyses the reaction N(6)-(2E)-butenoyl-L-lysyl-[protein] + H2O = (2E)-2-butenoate + L-lysyl-[protein]. The enzyme catalyses N(6)-[(S)-lactoyl]-L-lysyl-[protein] + H2O = (S)-lactate + L-lysyl-[protein]. Inositol tetraphosphate (1D-myo-inositol 1,4,5,6-tetrakisphosphate) may act as an intermolecular glue between HDAC1 and N-Cor repressor complex components. Histone deacetylase that catalyzes the deacetylation of lysine residues on the N-terminal part of the core histones (H2A, H2B, H3 and H4). Histone deacetylation gives a tag for epigenetic repression and plays an important role in transcriptional regulation, cell cycle progression and developmental events. Histone deacetylases act via the formation of large multiprotein complexes. Acts as a component of the histone deacetylase NuRD complex which participates in the remodeling of chromatin. As part of the SIN3B complex is recruited downstream of the constitutively active genes transcriptional start sites through interaction with histones and mitigates histone acetylation and RNA polymerase II progression within transcribed regions contributing to the regulation of transcription. Also functions as a deacetylase for non-histone targets, such as NR1D2, RELA, SP1, SP3, STAT3 and TSHZ3. Deacetylates SP proteins, SP1 and SP3, and regulates their function. Component of the BRG1-RB1-HDAC1 complex, which negatively regulates the CREST-mediated transcription in resting neurons. Upon calcium stimulation, HDAC1 is released from the complex and CREBBP is recruited, which facilitates transcriptional activation. Deacetylates TSHZ3 and regulates its transcriptional repressor activity. Deacetylates 'Lys-310' in RELA and thereby inhibits the transcriptional activity of NF-kappa-B. Deacetylates NR1D2 and abrogates the effect of KAT5-mediated relieving of NR1D2 transcription repression activity. Component of a RCOR/GFI/KDM1A/HDAC complex that suppresses, via histone deacetylase (HDAC) recruitment, a number of genes implicated in multilineage blood cell development. Involved in CIART-mediated transcriptional repression of the circadian transcriptional activator: CLOCK-BMAL1 heterodimer. Required for the transcriptional repression of circadian target genes, such as PER1, mediated by the large PER complex or CRY1 through histone deacetylation. In addition to protein deacetylase activity, also has protein-lysine deacylase activity: acts as a protein decrotonylase and delactylase by mediating decrotonylation ((2E)-butenoyl) and delactylation (lactoyl) of histones, respectively. The protein is Histone deacetylase 1 of Homo sapiens (Human).